The following is a 148-amino-acid chain: uncharacterized protein (148 aa).

This is an uncharacterized protein from Haemophilus influenzae (strain ATCC 51907 / DSM 11121 / KW20 / Rd).